A 282-amino-acid chain; its full sequence is Homeobox protein Hox-C12 (282 aa).

Disordered regions lie at residues 94-129 (YYREPCAEGGGGGLKREERGRDPGAGPGAALLPLEP) and 147-214 (GGDG…NSRS). Residues 162 to 175 (SCQSLESDSSSSLL) show a composition bias toward low complexity. Positions 214–273 (SRKKRKPYSKLQLAELEGEFLVNEFITRQRRRELSDRLNLSDQQVKIWFQNRRMKKKRLL) form a DNA-binding region, homeobox.

It belongs to the Abd-B homeobox family.

It localises to the nucleus. Its function is as follows. Sequence-specific transcription factor which is part of a developmental regulatory system that provides cells with specific positional identities on the anterior-posterior axis. This chain is Homeobox protein Hox-C12 (HOXC12), found in Homo sapiens (Human).